Consider the following 330-residue polypeptide: ADP-L-glycero-D-manno-heptose-6-epimerase (330 aa).

NADP(+) is bound by residues Phe-11 to Ile-12, Asp-32 to Asn-33, Lys-39, Lys-54, Glu-75 to Ser-79, and Asn-92. The Proton acceptor role is filled by Tyr-139. Lys-143 lines the NADP(+) pocket. Asn-168 is a substrate binding site. NADP(+) contacts are provided by Val-169 and Lys-177. Lys-177 functions as the Proton acceptor in the catalytic mechanism. Substrate-binding positions include Arg-179, His-186, Phe-200–Tyr-203, Arg-213, and Tyr-292.

The protein belongs to the NAD(P)-dependent epimerase/dehydratase family. HldD subfamily. Homopentamer. It depends on NADP(+) as a cofactor.

The enzyme catalyses ADP-D-glycero-beta-D-manno-heptose = ADP-L-glycero-beta-D-manno-heptose. It functions in the pathway nucleotide-sugar biosynthesis; ADP-L-glycero-beta-D-manno-heptose biosynthesis; ADP-L-glycero-beta-D-manno-heptose from D-glycero-beta-D-manno-heptose 7-phosphate: step 4/4. In terms of biological role, catalyzes the interconversion between ADP-D-glycero-beta-D-manno-heptose and ADP-L-glycero-beta-D-manno-heptose via an epimerization at carbon 6 of the heptose. This is ADP-L-glycero-D-manno-heptose-6-epimerase from Burkholderia cenocepacia (strain ATCC BAA-245 / DSM 16553 / LMG 16656 / NCTC 13227 / J2315 / CF5610) (Burkholderia cepacia (strain J2315)).